The sequence spans 792 residues: MYRVLRLLPLPLSVAISLSALADEKPPNWGLCPATLPLQGFEQAPGMDKHVVQSRPQLPTNIEGDTLTGTARTPLYQGNVLMARGDQLLGADSVRMDTETDSYVAEGHVRYQDSSILVVADRAEGNQDTDVHKISNIQYQLIGRRGNGVAKSVDIHGQVGQTHEATYTTCDPSQAIWRLRAPEIDVDNVEGFGVARHAVFEVGQWPVLYLPWFKFPIDSRRQTGLLYPQLGYSGRNGFDYAQPIYLNLAPNYDATLYPRYMQKRGFMIDTEFRYLYDDGKWQTRAAFIPNDQLRDKDRGRFSFNGYHNIDNHWQARASLAWVSDTRYMEDFSSRLVGMSSLSSLQSTVGVYGTGETWTAGLMADRWQLTDYSLNESALAYNRQPRLFFNWDKPVLDFLEFGLYSEVVRFKHDDAYLVALQNDGNYLRTGEVIRYYGGTRLDVKPYVSLPFTGASWYVTPTFGWRYSSYYLDSGIAEQLNGSRTPVRSLPIVSLDSGVYLDRDTTVFGRNYLNTLEPRFYYLYVPYRNQSDLPLFDTRAFTFSWGQLFRDSRYTGPDRQNDANQLTLAVTSRWLDQNTGKEDLALSVGQILYFKDSLVTLSDSEERIQKGKSVWVSDVAYNVNDRWTLNATYQWNPNFRRDDLASVRARYLIGSDGIINLAYRYRRNTLDGTTQLKQTDFSFLYPINPRWSAIGRYYYSLLDKKPLEIIGGLQWDSCCLAVRTVLRRHMRDRTGNMDNSIQLEFVFKGLSSVGQDTDRVLRRAILGYYRDDLYLVPPSNTTTDPDAYDPNKIP.

The N-terminal stretch at 1 to 22 is a signal peptide; that stretch reads MYRVLRLLPLPLSVAISLSALA.

The protein belongs to the LptD family. In terms of assembly, component of the lipopolysaccharide transport and assembly complex. Interacts with LptE and LptA.

It localises to the cell outer membrane. Functionally, together with LptE, is involved in the assembly of lipopolysaccharide (LPS) at the surface of the outer membrane. The chain is LPS-assembly protein LptD from Xylella fastidiosa (strain Temecula1 / ATCC 700964).